Reading from the N-terminus, the 498-residue chain is Guanosine-5'-triphosphate,3'-diphosphate pyrophosphatase (498 aa).

It belongs to the GppA/Ppx family. GppA subfamily.

It catalyses the reaction guanosine 3'-diphosphate 5'-triphosphate + H2O = guanosine 3',5'-bis(diphosphate) + phosphate + H(+). The protein operates within purine metabolism; ppGpp biosynthesis; ppGpp from GTP: step 2/2. Catalyzes the conversion of pppGpp to ppGpp. Guanosine pentaphosphate (pppGpp) is a cytoplasmic signaling molecule which together with ppGpp controls the 'stringent response', an adaptive process that allows bacteria to respond to amino acid starvation, resulting in the coordinated regulation of numerous cellular activities. The protein is Guanosine-5'-triphosphate,3'-diphosphate pyrophosphatase of Serratia proteamaculans (strain 568).